The chain runs to 199 residues: Recombination protein RecR (199 aa).

Residues 58-73 (CQTCRILSETDLCSLC) form a C4-type zinc finger. Residues 81–176 (GQLCVVEMPS…TTTRIAHGVP (96 aa)) form the Toprim domain.

The protein belongs to the RecR family.

In terms of biological role, may play a role in DNA repair. It seems to be involved in an RecBC-independent recombinational process of DNA repair. It may act with RecF and RecO. The polypeptide is Recombination protein RecR (Nitrosococcus oceani (strain ATCC 19707 / BCRC 17464 / JCM 30415 / NCIMB 11848 / C-107)).